The following is a 158-amino-acid chain: NAD(P)H-quinone oxidoreductase subunit J, chloroplastic (158 aa).

Belongs to the complex I 30 kDa subunit family. NDH is composed of at least 16 different subunits, 5 of which are encoded in the nucleus.

The protein resides in the plastid. The protein localises to the chloroplast thylakoid membrane. It carries out the reaction a plastoquinone + NADH + (n+1) H(+)(in) = a plastoquinol + NAD(+) + n H(+)(out). The enzyme catalyses a plastoquinone + NADPH + (n+1) H(+)(in) = a plastoquinol + NADP(+) + n H(+)(out). Functionally, NDH shuttles electrons from NAD(P)H:plastoquinone, via FMN and iron-sulfur (Fe-S) centers, to quinones in the photosynthetic chain and possibly in a chloroplast respiratory chain. The immediate electron acceptor for the enzyme in this species is believed to be plastoquinone. Couples the redox reaction to proton translocation, and thus conserves the redox energy in a proton gradient. This Chloranthus spicatus (Chulantree) protein is NAD(P)H-quinone oxidoreductase subunit J, chloroplastic.